A 199-amino-acid chain; its full sequence is Translation machinery-associated protein 22 (199 aa).

The 72-residue stretch at 97–168 (VVIRREARTK…EVEAYIHALL (72 aa)) folds into the SUI1 domain.

This sequence belongs to the DENR family. Interacts with the 40S ribosomal subunit.

The protein resides in the cytoplasm. The polypeptide is Translation machinery-associated protein 22 (TMA22) (Eremothecium gossypii (strain ATCC 10895 / CBS 109.51 / FGSC 9923 / NRRL Y-1056) (Yeast)).